We begin with the raw amino-acid sequence, 86 residues long: Cytochrome c-555 (86 aa).

Heme c is bound by residues Cys14, Cys17, His18, and Met60.

Binds 1 heme c group covalently per subunit.

Its function is as follows. This basic c-type monoheme cytochrome has been found exclusively in the green photosynthetic bacteria, although its role in bacterial photosynthesis is not established. It has an unusually low redox potential compared with mitochondrial cytochrome c. It is reactive with cytochrome c oxidases but not with reductases. In Chlorobaculum thiosulfatiphilum (Chlorobium limicola f.sp. thiosulfatophilum), this protein is Cytochrome c-555.